A 475-amino-acid polypeptide reads, in one-letter code: Flotillin-like protein 4 (475 aa).

Coiled-coil stretches lie at residues 235–255 (ENQREAEVAEANSELAKKKAA) and 305–325 (QYETKVQEANWELYKKQKEAE).

The protein belongs to the band 7/mec-2 family. Flotillin subfamily. In terms of tissue distribution, expressed in roots and nodules. Primarily expressed in vascular tissues. Upon induction of nodulation, expansion of expression in the root cortex in the region of elongating root hairs, which will eventually become colonized by bacteria. Expressed in the infection zone in nodules.

It is found in the membrane. The protein resides in the caveola. It localises to the cell membrane. In terms of biological role, may act as a scaffolding protein within caveolar membranes, functionally participating in formation of caveolae or caveolae-like vesicles. Required for normal infection threads initiation and elongation and nodulation. Probably involved in polar growth of the infection thread. The chain is Flotillin-like protein 4 (FLOT4) from Medicago truncatula (Barrel medic).